Here is a 497-residue protein sequence, read N- to C-terminus: Replication factor C large subunit (497 aa).

50–57 (GPAGVGKT) contacts ATP. Over residues 428 to 455 (KRRSLGRDEGKAFFEKKPKKQTPDKKQM) the composition is skewed to basic and acidic residues. A disordered region spans residues 428–497 (KRRSLGRDEG…AKPQKTLFDF (70 aa)). Residues 456–465 (DLTQIINSTP) show a composition bias toward polar residues. Residues 466-476 (QEDKVEKKETE) are compositionally biased toward basic and acidic residues.

The protein belongs to the activator 1 small subunits family. RfcL subfamily. As to quaternary structure, heteromultimer composed of small subunits (RfcS) and large subunits (RfcL).

Part of the RFC clamp loader complex which loads the PCNA sliding clamp onto DNA. The sequence is that of Replication factor C large subunit from Methanococcoides burtonii (strain DSM 6242 / NBRC 107633 / OCM 468 / ACE-M).